The primary structure comprises 926 residues: MKVSWPGENHWQVGPAVVESPAVGAPQVGGLPDVVPEGTLLNMVLKRMHRPRCCSYQLVFEHRRPSCIQGLRWTPLTNSEGSLDFRVSLEQATTEHVHKAGKLLYRHLLATYPTLIRDRKYHLRLHRQCCSGRELVDGILALGLGVHSRSQAVGICQVLLDEGALCHVKHDWTFQDRDAQFYRFPGPEPQPAGTHDVEEELVEAMALLSQRGPDALLTVALRKSPGQRTDEELDLIFEELVHIKAVAHLSNSVKRELAAVLLFEPHSKAGTVLFSQGDKGTSWYIIWKGSVNVVTRGKGLVTTLHEGDDFGQLALVNDAPRAATIILRENNCHFLRVDKQDFNRIIKDVEAKTMRLEEHGKVVLVLERTSQGAGPSRPPTPGRNRYTVMSGTPEKILELLLEAMRPDSSAHDPTETFLSDFLLTHSVFMPCTQLFAALLHHFHVEPSEPAGGSEQERSTYICNKRQQILRLVSRWVALYSPMLRSDPVATSFLQKLSDLVSRDTRLSNLLREQYPERRRHHRLENGCGNVSPQTKARNAPVWFPNHEEPLPSSAGAIRVGDKVPYDICRPDHSVLTLHLPVTASVREVMAALAHEDHWTKGQVLVKVNSAGDVVGLQPDARGVATSLGLNERIFVVDPQEVHELTPHPEQLGPTLGSSEMLDLVSAKDLAGQLTEHDWNLFNRIHQVELIHYVLGPQHLRDVTTANLERFMRRFNELQYWVATELCLCPVPGPRAQLLRKFIKLAAHLKEQKNLNSFFAVMFGLSNSAISRLAHTWERLPHKVRKLYSALERLLDPSWNHRVYRLALTKLSPPVIPFMPLLLKDMTFIHEGNHTLVENLINFEKMRMMARAVRMLHHCRSHSTAPLSPLRSRVSHIHEDSQASRISTCSEQSLSTRSPASTWAYVQQLKVIDNQRELSRLSRELEP.

Phosphoserine is present on Ser79. The DEP domain occupies Ala110–Gly186. Residues Thr218–His242 form an interaction with PDE3B region. 3',5'-cyclic AMP contacts are provided by residues Gly311–Ala314 and Arg321–Ala322. A disordered region spans residues Thr369–Val388. Positions Asn384–His521 constitute an N-terminal Ras-GEF domain. The tract at residues Glu398–Leu422 is interaction with PDE3B. Residues Ser531 and Ser867 each carry the phosphoserine modification. Positions Ser665–Ser892 constitute a Ras-GEF domain.

As to quaternary structure, interacts with PDE3B and PIK3R6; form a signaling complex that regulates phosphatidylinositol 3-kinase gamma in angiogenesis. Expressed at low levels in adult brain. Strongly expressed in parts of the neonatal brain, including the septum and the thalamus.

It localises to the cytoplasm. The protein resides in the membrane. In terms of biological role, guanine nucleotide exchange factor (GEF) for RAP1A and RAP2A small GTPases that is activated by binding cAMP. Through simultaneous binding of PDE3B to RAPGEF3 and PIK3R6 is assembled in a signaling complex in which it activates the PI3K gamma complex and which is involved in angiogenesis. Plays a role in the modulation of the cAMP-induced dynamic control of endothelial barrier function through a pathway that is independent on Rho-mediated signaling. Required for the actin rearrangement at cell-cell junctions, such as stress fibers and junctional actin. The sequence is that of Rap guanine nucleotide exchange factor 3 (Rapgef3) from Rattus norvegicus (Rat).